The sequence spans 501 residues: Actin nucleation-promoting factor WASL (501 aa).

The residue at position 2 (S2) is an N-acetylserine. The 108-residue stretch at 31–138 folds into the WH1 domain; the sequence is LGKKCVTMSS…KAVTDLLGRR (108 aa). The interval 135–158 is disordered; the sequence is LGRRQRKSEKRRDAPNGPNLPMAT. The CRIB domain occupies 200 to 213; it reads IGTPSNFQHIGHVG. Residue S239 is modified to Phosphoserine; by TNK2. At Y253 the chain carries Phosphotyrosine; by FAK1 and TNK2. 2 disordered regions span residues 263-403 and 442-501; these read EAVK…GNKA and QLKS…EWED. Residues 273–387 show a composition bias toward pro residues; the sequence is APPPPPPSRG…PPGPPPPPGL (115 aa). Position 304 is an omega-N-methylarginine (R304). 2 consecutive WH2 domains span residues 401-418 and 429-446; these read NKAA…LKKV and GRDA…LKSV. The segment covering 442–453 has biased composition (polar residues); that stretch reads QLKSVSDGQEST. Residues S480 and S481 each carry the phosphoserine modification. A compositionally biased stretch (acidic residues) spans 482–501; it reads DEDEDDDDEEDFEDDDEWED.

As to quaternary structure, binds actin and the Arp2/3 complex. Interacts with CDC42. Interacts with FCHSD1. Interacts with FCHSD2. Binds to SH3 domains of GRB2. Interacts with the C-terminal SH3 domain of DNMBP. Interacts with SNX9. Interacts with the WW domains of PRPF40A/FBP11. Interacts with PTK2/FAK1. Interacts with PACSIN1, PACSIN2 and PACSIN3. Interacts with NOSTRIN. Binds to TNK2. Interacts with SNX33. Interacts with NONO (via second RRM domain); the interaction is direct. Component of a multiprotein complex with NONO and SFPQ; associates with the complex via direct interaction with NONO. Phosphorylation at Ser-239, Tyr-253, Ser-480 and Ser-481 enhances actin polymerization activity.

Its subcellular location is the cytoplasm. The protein localises to the cytoskeleton. The protein resides in the nucleus. In terms of biological role, regulates actin polymerization by stimulating the actin-nucleating activity of the Arp2/3 complex. Involved in various processes, such as mitosis and cytokinesis, via its role in the regulation of actin polymerization. Together with CDC42, involved in the extension and maintenance of the formation of thin, actin-rich surface projections called filopodia. In addition to its role in the cytoplasm, also plays a role in the nucleus by regulating gene transcription, probably by promoting nuclear actin polymerization. Binds to HSF1/HSTF1 and forms a complex on heat shock promoter elements (HSE) that negatively regulates HSP90 expression. Plays a role in dendrite spine morphogenesis. The chain is Actin nucleation-promoting factor WASL (Wasl) from Mus musculus (Mouse).